The primary structure comprises 473 residues: Tubulin gamma chain (473 aa).

The tract at residues 33-56 (TDGLSQLPDSSTERDDDTKPFFRE) is disordered. A compositionally biased stretch (basic and acidic residues) spans 43 to 56 (STERDDDTKPFFRE). 143–149 (AGGTGSG) provides a ligand contact to GTP.

The protein belongs to the tubulin family. In terms of assembly, interacts with SPC72, SPC97 and SPC98.

It localises to the cytoplasm. It is found in the cytoskeleton. The protein resides in the microtubule organizing center. Its subcellular location is the spindle pole body. Its function is as follows. Tubulin is the major constituent of microtubules. The gamma chain is found at microtubule organizing centers (MTOC) such as the spindle poles or the centrosome, suggesting that it is involved in the minus-end nucleation of microtubule assembly. TUB4 is an important spindle pole body component that organizes both cytoplasmic and nuclear microtubule arrays. This Saccharomyces cerevisiae (strain ATCC 204508 / S288c) (Baker's yeast) protein is Tubulin gamma chain (TUB4).